We begin with the raw amino-acid sequence, 447 residues long: N-succinylarginine dihydrolase (447 aa).

Substrate contacts are provided by residues Ala19–Ser28, Asn110, and His137–Arg138. Glu174 is a catalytic residue. Position 214 (Arg214) interacts with substrate. Residue His250 is part of the active site. The substrate site is built by Asp252 and Asn365. The active-site Nucleophile is the Cys371.

The protein belongs to the succinylarginine dihydrolase family. In terms of assembly, homodimer.

It carries out the reaction N(2)-succinyl-L-arginine + 2 H2O + 2 H(+) = N(2)-succinyl-L-ornithine + 2 NH4(+) + CO2. Its pathway is amino-acid degradation; L-arginine degradation via AST pathway; L-glutamate and succinate from L-arginine: step 2/5. In terms of biological role, catalyzes the hydrolysis of N(2)-succinylarginine into N(2)-succinylornithine, ammonia and CO(2). The chain is N-succinylarginine dihydrolase from Acinetobacter baumannii (strain SDF).